The sequence spans 312 residues: Porphobilinogen deaminase (312 aa).

Cys241 bears the S-(dipyrrolylmethanemethyl)cysteine mark.

Belongs to the HMBS family. As to quaternary structure, monomer. Dipyrromethane serves as cofactor.

The enzyme catalyses 4 porphobilinogen + H2O = hydroxymethylbilane + 4 NH4(+). The protein operates within porphyrin-containing compound metabolism; protoporphyrin-IX biosynthesis; coproporphyrinogen-III from 5-aminolevulinate: step 2/4. In terms of biological role, tetrapolymerization of the monopyrrole PBG into the hydroxymethylbilane pre-uroporphyrinogen in several discrete steps. This chain is Porphobilinogen deaminase, found in Aliarcobacter butzleri (strain RM4018) (Arcobacter butzleri).